Consider the following 139-residue polypeptide: Peptide methionine sulfoxide reductase MsrB (139 aa).

The 123-residue stretch at 8 to 130 folds into the MsrB domain; that stretch reads EREWQRELSP…NSASLQLKTD (123 aa). Zn(2+)-binding residues include Cys47, Cys50, Cys96, and Cys99. Cys119 serves as the catalytic Nucleophile.

Belongs to the MsrB Met sulfoxide reductase family. Zn(2+) is required as a cofactor.

It carries out the reaction L-methionyl-[protein] + [thioredoxin]-disulfide + H2O = L-methionyl-(R)-S-oxide-[protein] + [thioredoxin]-dithiol. The polypeptide is Peptide methionine sulfoxide reductase MsrB (Acinetobacter baylyi (strain ATCC 33305 / BD413 / ADP1)).